The following is a 325-amino-acid chain: Polyamine aminopropyltransferase (325 aa).

In terms of domain architecture, PABS spans 11–248; it reads SSMAEDFAVE…TLWAMAMASD (238 aa). Q44 provides a ligand contact to S-methyl-5'-thioadenosine. 2 residues coordinate spermidine: H75 and D99. Residues E119 and 151–152 each bind S-methyl-5'-thioadenosine; that span reads DG. The active-site Proton acceptor is D169. P176 provides a ligand contact to S-methyl-5'-thioadenosine.

The protein belongs to the spermidine/spermine synthase family. Homodimer or homotetramer.

It is found in the cytoplasm. It catalyses the reaction S-adenosyl 3-(methylsulfanyl)propylamine + putrescine = S-methyl-5'-thioadenosine + spermidine + H(+). The protein operates within amine and polyamine biosynthesis; spermidine biosynthesis; spermidine from putrescine: step 1/1. In terms of biological role, catalyzes the irreversible transfer of a propylamine group from the amino donor S-adenosylmethioninamine (decarboxy-AdoMet) to putrescine (1,4-diaminobutane) to yield spermidine. The sequence is that of Polyamine aminopropyltransferase from Nitrosomonas europaea (strain ATCC 19718 / CIP 103999 / KCTC 2705 / NBRC 14298).